Here is a 70-residue protein sequence, read N- to C-terminus: DNA-directed RNA polymerase subunit omega (70 aa).

The protein belongs to the RNA polymerase subunit omega family. As to quaternary structure, in cyanobacteria the RNAP catalytic core is composed of 2 alpha, 1 beta, 1 beta', 1 gamma and 1 omega subunit. When a sigma factor is associated with the core the holoenzyme is formed, which can initiate transcription.

It catalyses the reaction RNA(n) + a ribonucleoside 5'-triphosphate = RNA(n+1) + diphosphate. Its function is as follows. Promotes RNA polymerase assembly. Latches the N- and C-terminal regions of the beta' subunit thereby facilitating its interaction with the beta and alpha subunits. This is DNA-directed RNA polymerase subunit omega from Prochlorococcus marinus (strain NATL1A).